Consider the following 100-residue polypeptide: Small ribosomal subunit protein bS20 (100 aa).

Basic residues predominate over residues 1 to 20 (MASGKPKKKNPRLASGRKRV). A disordered region spans residues 1–21 (MASGKPKKKNPRLASGRKRVR).

This sequence belongs to the bacterial ribosomal protein bS20 family.

Its function is as follows. Binds directly to 16S ribosomal RNA. The chain is Small ribosomal subunit protein bS20 from Albidiferax ferrireducens (strain ATCC BAA-621 / DSM 15236 / T118) (Rhodoferax ferrireducens).